We begin with the raw amino-acid sequence, 304 residues long: Phosphoribosylaminoimidazole-succinocarboxamide synthase (304 aa).

Belongs to the SAICAR synthetase family.

It carries out the reaction 5-amino-1-(5-phospho-D-ribosyl)imidazole-4-carboxylate + L-aspartate + ATP = (2S)-2-[5-amino-1-(5-phospho-beta-D-ribosyl)imidazole-4-carboxamido]succinate + ADP + phosphate + 2 H(+). It functions in the pathway purine metabolism; IMP biosynthesis via de novo pathway; 5-amino-1-(5-phospho-D-ribosyl)imidazole-4-carboxamide from 5-amino-1-(5-phospho-D-ribosyl)imidazole-4-carboxylate: step 1/2. This chain is Phosphoribosylaminoimidazole-succinocarboxamide synthase, found in Corynebacterium efficiens (strain DSM 44549 / YS-314 / AJ 12310 / JCM 11189 / NBRC 100395).